Here is a 377-residue protein sequence, read N- to C-terminus: Chaperone protein DnaJ (377 aa).

In terms of domain architecture, J spans 5–70 (DFYEVLGVER…SKRAAYDQYG (66 aa)). Residues 136–214 (GTTVTIRVPT…CHGQGRVEEQ (79 aa)) form a CR-type zinc finger. Residues Cys-149, Cys-152, Cys-166, Cys-169, Cys-188, Cys-191, Cys-202, and Cys-205 each coordinate Zn(2+). CXXCXGXG motif repeat units lie at residues 149–156 (CKTCNGSG), 166–173 (CTTCGGIG), 188–195 (CPRCHGTG), and 202–209 (CGSCHGQG).

It belongs to the DnaJ family. Homodimer. The cofactor is Zn(2+).

Its subcellular location is the cytoplasm. Its function is as follows. Participates actively in the response to hyperosmotic and heat shock by preventing the aggregation of stress-denatured proteins and by disaggregating proteins, also in an autonomous, DnaK-independent fashion. Unfolded proteins bind initially to DnaJ; upon interaction with the DnaJ-bound protein, DnaK hydrolyzes its bound ATP, resulting in the formation of a stable complex. GrpE releases ADP from DnaK; ATP binding to DnaK triggers the release of the substrate protein, thus completing the reaction cycle. Several rounds of ATP-dependent interactions between DnaJ, DnaK and GrpE are required for fully efficient folding. Also involved, together with DnaK and GrpE, in the DNA replication of plasmids through activation of initiation proteins. This Pseudomonas aeruginosa (strain LESB58) protein is Chaperone protein DnaJ.